The chain runs to 187 residues: CASP-like protein SELMODRAFT_416718 (187 aa).

Residues 1 to 21 form a helical membrane-spanning segment; that stretch reads MMFGGVGMATLPLSLIFAFKN. Topologically, residues 22 to 100 are extracellular; that stretch reads RPKCVITRAQ…EAFPQGEKAD (79 aa). A helical transmembrane segment spans residues 101–119; the sequence is TSWALTVLFYLAKLVFGIL. Over 120 to 125 the chain is Cytoplasmic; it reads GLALSV. The helical transmembrane segment at 126–145 threads the bilayer; sequence IWLLHIIVFMLVNPPAFPFL. The Extracellular portion of the chain corresponds to 146–155; the sequence is NQVFIQLDSA. The helical transmembrane segment at 156 to 176 threads the bilayer; the sequence is WGLLGTTAFAIFCYYLVMSVI. The Cytoplasmic segment spans residues 177–187; the sequence is SGEMHSIYPMK.

Belongs to the Casparian strip membrane proteins (CASP) family. Homodimer and heterodimers.

It is found in the cell membrane. In Selaginella moellendorffii (Spikemoss), this protein is CASP-like protein SELMODRAFT_416718.